We begin with the raw amino-acid sequence, 504 residues long: Maturase K (504 aa).

The protein belongs to the intron maturase 2 family. MatK subfamily.

It localises to the plastid. The protein localises to the chloroplast. Usually encoded in the trnK tRNA gene intron. Probably assists in splicing its own and other chloroplast group II introns. This is Maturase K from Pseudoturritis turrita (Tower rock-cress).